A 152-amino-acid polypeptide reads, in one-letter code: Transcriptional repressor NrdR (152 aa).

The interval 1-21 (MRCPFCGNGDTQVKDSRPTED) is disordered. Residues 3–34 (CPFCGNGDTQVKDSRPTEDSAAIRRRRFCPAC) fold into a zinc finger. Residues 12 to 21 (QVKDSRPTED) are compositionally biased toward basic and acidic residues. Residues 49–139 (LVIVKKDGQR…VYRNFREAKD (91 aa)) enclose the ATP-cone domain.

It belongs to the NrdR family. Zn(2+) is required as a cofactor.

Its function is as follows. Negatively regulates transcription of bacterial ribonucleotide reductase nrd genes and operons by binding to NrdR-boxes. This Rhodospirillum rubrum (strain ATCC 11170 / ATH 1.1.1 / DSM 467 / LMG 4362 / NCIMB 8255 / S1) protein is Transcriptional repressor NrdR.